Consider the following 957-residue polypeptide: Sorting nexin-13 (957 aa).

One can recognise a PXA domain in the interval 97-284 (ANIIDEPLQQ…YVIWMIRDSN (188 aa)). In terms of domain architecture, RGS spans 373–511 (PLDSILVDNV…SFRQNALYVR (139 aa)). Residues 559 to 680 (VQLHAYISDT…DFLENKAYSK (122 aa)) enclose the PX domain. Arginine 601, serine 603, lysine 628, and arginine 642 together coordinate a 1,2-diacyl-sn-glycero-3-phospho-(1D-myo-inositol-3-phosphate).

Belongs to the sorting nexin family.

The protein localises to the early endosome membrane. Functionally, may be involved in several stages of intracellular trafficking. Acts as a GAP for Galphas. May play a role in endosome homeostasis. This chain is Sorting nexin-13 (Snx13), found in Mus musculus (Mouse).